The primary structure comprises 86 residues: Large ribosomal subunit protein eL43 (86 aa).

Zn(2+)-binding residues include cysteine 38, cysteine 41, cysteine 57, and cysteine 60. A C4-type zinc finger spans residues 38–60; that stretch reads CPFCGSTGTVRRVSVGVWSCRKC.

It belongs to the eukaryotic ribosomal protein eL43 family. Putative zinc-binding subfamily. In terms of assembly, part of the 50S ribosomal subunit. It depends on Zn(2+) as a cofactor.

Its function is as follows. Binds to the 23S rRNA. This Aeropyrum pernix (strain ATCC 700893 / DSM 11879 / JCM 9820 / NBRC 100138 / K1) protein is Large ribosomal subunit protein eL43.